Reading from the N-terminus, the 212-residue chain is Large ribosomal subunit protein uL3 (212 aa).

The disordered stretch occupies residues 117–142 (TSKGKGFQGNIKRHNQSRGPMTHGSR).

This sequence belongs to the universal ribosomal protein uL3 family. Part of the 50S ribosomal subunit. Forms a cluster with proteins L14 and L19.

In terms of biological role, one of the primary rRNA binding proteins, it binds directly near the 3'-end of the 23S rRNA, where it nucleates assembly of the 50S subunit. The sequence is that of Large ribosomal subunit protein uL3 from Acholeplasma laidlawii (strain PG-8A).